Reading from the N-terminus, the 339-residue chain is Dihydroorotate dehydrogenase (quinone) (339 aa).

FMN-binding positions include 62–66 (AGMDK) and Thr-86. Lys-66 contacts substrate. Residue 111-115 (NRMGF) coordinates substrate. The FMN site is built by Asn-139 and Asn-172. Asn-172 is a binding site for substrate. The active-site Nucleophile is the Ser-175. Substrate is bound at residue Asn-177. Lys-217 and Thr-245 together coordinate FMN. 246-247 (NT) contacts substrate. FMN is bound by residues Gly-268, Gly-297, and 318–319 (YS).

This sequence belongs to the dihydroorotate dehydrogenase family. Type 2 subfamily. In terms of assembly, monomer. It depends on FMN as a cofactor.

The protein resides in the cell membrane. It carries out the reaction (S)-dihydroorotate + a quinone = orotate + a quinol. The protein operates within pyrimidine metabolism; UMP biosynthesis via de novo pathway; orotate from (S)-dihydroorotate (quinone route): step 1/1. In terms of biological role, catalyzes the conversion of dihydroorotate to orotate with quinone as electron acceptor. In Shewanella sediminis (strain HAW-EB3), this protein is Dihydroorotate dehydrogenase (quinone).